The following is a 617-amino-acid chain: Dihydroxy-acid dehydratase (617 aa).

Mg(2+) is bound at residue aspartate 81. Cysteine 122 contributes to the [2Fe-2S] cluster binding site. Positions 123 and 124 each coordinate Mg(2+). Lysine 124 is subject to N6-carboxylysine. Cysteine 195 is a binding site for [2Fe-2S] cluster. A Mg(2+)-binding site is contributed by glutamate 491. Catalysis depends on serine 517, which acts as the Proton acceptor.

The protein belongs to the IlvD/Edd family. In terms of assembly, homodimer. Requires [2Fe-2S] cluster as cofactor. Mg(2+) is required as a cofactor.

The catalysed reaction is (2R)-2,3-dihydroxy-3-methylbutanoate = 3-methyl-2-oxobutanoate + H2O. It carries out the reaction (2R,3R)-2,3-dihydroxy-3-methylpentanoate = (S)-3-methyl-2-oxopentanoate + H2O. The protein operates within amino-acid biosynthesis; L-isoleucine biosynthesis; L-isoleucine from 2-oxobutanoate: step 3/4. Its pathway is amino-acid biosynthesis; L-valine biosynthesis; L-valine from pyruvate: step 3/4. Functions in the biosynthesis of branched-chain amino acids. Catalyzes the dehydration of (2R,3R)-2,3-dihydroxy-3-methylpentanoate (2,3-dihydroxy-3-methylvalerate) into 2-oxo-3-methylpentanoate (2-oxo-3-methylvalerate) and of (2R)-2,3-dihydroxy-3-methylbutanoate (2,3-dihydroxyisovalerate) into 2-oxo-3-methylbutanoate (2-oxoisovalerate), the penultimate precursor to L-isoleucine and L-valine, respectively. The sequence is that of Dihydroxy-acid dehydratase from Buchnera aphidicola subsp. Diuraphis noxia.